A 316-amino-acid polypeptide reads, in one-letter code: N-acetyl-gamma-glutamyl-phosphate reductase (316 aa).

Cys-136 is a catalytic residue.

The protein belongs to the NAGSA dehydrogenase family. Type 1 subfamily.

Its subcellular location is the cytoplasm. The enzyme catalyses N-acetyl-L-glutamate 5-semialdehyde + phosphate + NADP(+) = N-acetyl-L-glutamyl 5-phosphate + NADPH + H(+). It functions in the pathway amino-acid biosynthesis; L-arginine biosynthesis; N(2)-acetyl-L-ornithine from L-glutamate: step 3/4. In terms of biological role, catalyzes the NADPH-dependent reduction of N-acetyl-5-glutamyl phosphate to yield N-acetyl-L-glutamate 5-semialdehyde. The chain is N-acetyl-gamma-glutamyl-phosphate reductase from Xanthomonas euvesicatoria pv. vesicatoria (strain 85-10) (Xanthomonas campestris pv. vesicatoria).